The primary structure comprises 322 residues: Undecaprenyl-phosphate 4-deoxy-4-formamido-L-arabinose transferase (322 aa).

Topologically, residues 1–235 are cytoplasmic; the sequence is MFEIHPVKKV…TCLTTTPLRM (235 aa). Residues 236–256 form a helical membrane-spanning segment; the sequence is LSLLGSIIAIGGFSIAVLLVI. The Periplasmic portion of the chain corresponds to 257–269; it reads LRLTFGPQWAAEG. A helical transmembrane segment spans residues 270–290; sequence VFMLFAVLFTFIGAQFIGMGL. Residues 291–322 lie on the Cytoplasmic side of the membrane; that stretch reads LGEYIGRIYTDVRARPRYFVQQVIRPSSKENE.

Belongs to the glycosyltransferase 2 family.

The protein resides in the cell inner membrane. It carries out the reaction UDP-4-deoxy-4-formamido-beta-L-arabinose + di-trans,octa-cis-undecaprenyl phosphate = 4-deoxy-4-formamido-alpha-L-arabinopyranosyl di-trans,octa-cis-undecaprenyl phosphate + UDP. The protein operates within glycolipid biosynthesis; 4-amino-4-deoxy-alpha-L-arabinose undecaprenyl phosphate biosynthesis; 4-amino-4-deoxy-alpha-L-arabinose undecaprenyl phosphate from UDP-4-deoxy-4-formamido-beta-L-arabinose and undecaprenyl phosphate: step 1/2. It participates in bacterial outer membrane biogenesis; lipopolysaccharide biosynthesis. Catalyzes the transfer of 4-deoxy-4-formamido-L-arabinose from UDP to undecaprenyl phosphate. The modified arabinose is attached to lipid A and is required for resistance to polymyxin and cationic antimicrobial peptides. This is Undecaprenyl-phosphate 4-deoxy-4-formamido-L-arabinose transferase from Escherichia coli O45:K1 (strain S88 / ExPEC).